We begin with the raw amino-acid sequence, 292 residues long: Sulfofructosephosphate aldolase (292 aa).

Lysine 193 serves as the catalytic Schiff-base intermediate with substrate.

This sequence belongs to the aldolase LacD family. In terms of assembly, homotetramer.

The enzyme catalyses 6-deoxy-6-sulfo-D-fructose 1-phosphate = (2S)-3-sulfolactaldehyde + dihydroxyacetone phosphate. Functionally, cleaves 6-deoxy-6-sulfo-D-fructose 1-phosphate (SFP) to form dihydroxyacetone phosphate (DHAP) and 3-sulfolactaldehyde (SLA). The sequence is that of Sulfofructosephosphate aldolase (yihT) from Escherichia coli (strain K12).